We begin with the raw amino-acid sequence, 283 residues long: Bifunctional protein FolD 2 (283 aa).

Residues 165–167, Thr-192, and Val-233 each bind NADP(+); that span reads GRG.

The protein belongs to the tetrahydrofolate dehydrogenase/cyclohydrolase family. As to quaternary structure, homodimer.

The enzyme catalyses (6R)-5,10-methylene-5,6,7,8-tetrahydrofolate + NADP(+) = (6R)-5,10-methenyltetrahydrofolate + NADPH. It carries out the reaction (6R)-5,10-methenyltetrahydrofolate + H2O = (6R)-10-formyltetrahydrofolate + H(+). The protein operates within one-carbon metabolism; tetrahydrofolate interconversion. Catalyzes the oxidation of 5,10-methylenetetrahydrofolate to 5,10-methenyltetrahydrofolate and then the hydrolysis of 5,10-methenyltetrahydrofolate to 10-formyltetrahydrofolate. The chain is Bifunctional protein FolD 2 from Nocardioides sp. (strain ATCC BAA-499 / JS614).